Consider the following 86-residue polypeptide: Toxin Td8 (86 aa).

The N-terminal stretch at 1–20 (MTRFVLFLSCFFLIGMVVEC) is a signal peptide. The LCN-type CS-alpha/beta domain occupies 21 to 83 (KDGYLVGDDG…IWNSATNRCR (63 aa)). 4 disulfides stabilise this stretch: Cys-31/Cys-82, Cys-35/Cys-57, Cys-43/Cys-63, and Cys-47/Cys-65. At Arg-83 the chain carries Arginine amide.

Expressed by the venom gland.

The protein resides in the secreted. Its function is as follows. Beta toxins bind voltage-independently at site-4 of sodium channels (Nav) and shift the voltage of activation toward more negative potentials thereby affecting sodium channel activation and promoting spontaneous and repetitive firing. The polypeptide is Toxin Td8 (Tityus discrepans (Venezuelan scorpion)).